The sequence spans 71 residues: Large ribosomal subunit protein bL31 (71 aa).

The Zn(2+) site is built by C16, C18, C37, and C40.

The protein belongs to the bacterial ribosomal protein bL31 family. Type A subfamily. Part of the 50S ribosomal subunit. It depends on Zn(2+) as a cofactor.

Functionally, binds the 23S rRNA. In Mannheimia succiniciproducens (strain KCTC 0769BP / MBEL55E), this protein is Large ribosomal subunit protein bL31.